Reading from the N-terminus, the 533-residue chain is NAD(P)H-quinone oxidoreductase chain 4 1 (533 aa).

The next 14 membrane-spanning stretches (helical) occupy residues 6 to 26 (FPWL…IPLI), 37 to 57 (YSLF…WQHF), 87 to 107 (LSMP…LASW), 113 to 133 (PKLF…VFTA), 137 to 157 (MLFF…ISIW), 169 to 189 (FILY…ALAF), 209 to 229 (WLEL…LSIF), 243 to 263 (NAPG…YALI), 277 to 297 (FAPV…LNAF), 311 to 331 (ISHM…GLNG), 332 to 352 (ALLQ…LAGV), 376 to 396 (FALF…SGFV), 417 to 437 (VTIL…LSML), and 461 to 481 (LFVA…PKLT).

This sequence belongs to the complex I subunit 4 family.

It localises to the cellular thylakoid membrane. The catalysed reaction is a plastoquinone + NADH + (n+1) H(+)(in) = a plastoquinol + NAD(+) + n H(+)(out). The enzyme catalyses a plastoquinone + NADPH + (n+1) H(+)(in) = a plastoquinol + NADP(+) + n H(+)(out). Functionally, NDH-1 shuttles electrons from NAD(P)H, via FMN and iron-sulfur (Fe-S) centers, to quinones in the respiratory chain. The immediate electron acceptor for the enzyme in this species is believed to be plastoquinone. Couples the redox reaction to proton translocation (for every two electrons transferred, four hydrogen ions are translocated across the cytoplasmic membrane), and thus conserves the redox energy in a proton gradient. In Synechococcus elongatus (strain ATCC 33912 / PCC 7942 / FACHB-805) (Anacystis nidulans R2), this protein is NAD(P)H-quinone oxidoreductase chain 4 1.